We begin with the raw amino-acid sequence, 310 residues long: Succinate dehydrogenase assembly factor 2, mitochondrial (310 aa).

Over residues 35–48 (LKDGSDEASPEVKA) the composition is skewed to basic and acidic residues. The tract at residues 35–67 (LKDGSDEASPEVKAHRANQANKAPNQFVPNTTS) is disordered. Polar residues predominate over residues 52–67 (NQANKAPNQFVPNTTS).

It belongs to the SDHAF2 family. In terms of assembly, interacts with the flavoprotein subunit within the SDH catalytic dimer.

It localises to the mitochondrion matrix. Plays an essential role in the assembly of succinate dehydrogenase (SDH), an enzyme complex (also referred to as respiratory complex II) that is a component of both the tricarboxylic acid (TCA) cycle and the mitochondrial electron transport chain, and which couples the oxidation of succinate to fumarate with the reduction of ubiquinone (coenzyme Q) to ubiquinol. Required for flavinylation (covalent attachment of FAD) of the flavoprotein subunit of the SDH catalytic dimer. This chain is Succinate dehydrogenase assembly factor 2, mitochondrial, found in Penicillium rubens (strain ATCC 28089 / DSM 1075 / NRRL 1951 / Wisconsin 54-1255) (Penicillium chrysogenum).